The chain runs to 349 residues: Putative nuclease HARBI1 (349 aa).

The region spanning 148-300 (VDCMHVAIKA…IILACCVLHN (153 aa)) is the DDE Tnp4 domain. D149, D199, D225, and E261 together coordinate a divalent metal cation.

The protein belongs to the HARBI1 family. As to quaternary structure, interacts with NAIF1. A divalent metal cation serves as cofactor. As to expression, detected in brain.

The protein localises to the nucleus. It is found in the cytoplasm. Functionally, transposase-derived protein that may have nuclease activity (Potential). Does not have transposase activity. The polypeptide is Putative nuclease HARBI1 (HARBI1) (Bos taurus (Bovine)).